A 131-amino-acid chain; its full sequence is Thioredoxin H4-1 (131 aa).

Residues 3–129 (SCVGKERSDE…LEKKVAALAD (127 aa)) enclose the Thioredoxin domain. Active-site nucleophile residues include Cys-55 and Cys-58. A disulfide bridge links Cys-55 with Cys-58.

The protein belongs to the thioredoxin family. Plant H-type subfamily.

It localises to the cytoplasm. In terms of biological role, probable thiol-disulfide oxidoreductase that may be involved in the redox regulation of a number of cytosolic enzymes. This Oryza sativa subsp. japonica (Rice) protein is Thioredoxin H4-1.